Consider the following 140-residue polypeptide: Sex-regulated protein janus-B (140 aa).

Arginine 42 is a binding site for substrate. The active-site Proton acceptor is histidine 69. 110 to 112 (SRT) provides a ligand contact to substrate.

Belongs to the janus family.

Functionally, janA and janB regulate somatic sex differentiation. This Drosophila orena (Fruit fly) protein is Sex-regulated protein janus-B (janB).